A 159-amino-acid polypeptide reads, in one-letter code: Phosphopantetheine adenylyltransferase (159 aa).

A substrate-binding site is contributed by Thr-10. ATP-binding positions include 10–11 (TF) and His-18. The substrate site is built by Lys-42, Met-74, and Arg-88. Residues 89–91 (GLR), Glu-99, and 124–130 (WSFISSS) contribute to the ATP site.

Belongs to the bacterial CoaD family. Homohexamer. Mg(2+) serves as cofactor.

The protein localises to the cytoplasm. The catalysed reaction is (R)-4'-phosphopantetheine + ATP + H(+) = 3'-dephospho-CoA + diphosphate. Its pathway is cofactor biosynthesis; coenzyme A biosynthesis; CoA from (R)-pantothenate: step 4/5. In terms of biological role, reversibly transfers an adenylyl group from ATP to 4'-phosphopantetheine, yielding dephospho-CoA (dPCoA) and pyrophosphate. This chain is Phosphopantetheine adenylyltransferase, found in Salmonella dublin (strain CT_02021853).